The primary structure comprises 275 residues: Large ribosomal subunit protein uL2 (275 aa).

2 disordered regions span residues 1 to 20 (MAVK…TTAD) and 214 to 275 (WLGR…TRRK). A compositionally biased stretch (basic residues) spans 255–275 (KGLKTRRKRKTSDRFIVTRRK).

It belongs to the universal ribosomal protein uL2 family. In terms of assembly, part of the 50S ribosomal subunit. Forms a bridge to the 30S subunit in the 70S ribosome.

Functionally, one of the primary rRNA binding proteins. Required for association of the 30S and 50S subunits to form the 70S ribosome, for tRNA binding and peptide bond formation. It has been suggested to have peptidyltransferase activity; this is somewhat controversial. Makes several contacts with the 16S rRNA in the 70S ribosome. The sequence is that of Large ribosomal subunit protein uL2 (rplB) from Deinococcus radiodurans (strain ATCC 13939 / DSM 20539 / JCM 16871 / CCUG 27074 / LMG 4051 / NBRC 15346 / NCIMB 9279 / VKM B-1422 / R1).